The following is a 240-amino-acid chain: Carboxy-S-adenosyl-L-methionine synthase (240 aa).

S-adenosyl-L-methionine is bound by residues tyrosine 35, glycine 61–serine 63, aspartate 86–asparagine 87, aspartate 112–isoleucine 113, and arginine 194.

It belongs to the class I-like SAM-binding methyltransferase superfamily. Cx-SAM synthase family. As to quaternary structure, homodimer.

The enzyme catalyses prephenate + S-adenosyl-L-methionine = carboxy-S-adenosyl-L-methionine + 3-phenylpyruvate + H2O. Catalyzes the conversion of S-adenosyl-L-methionine (SAM) to carboxy-S-adenosyl-L-methionine (Cx-SAM). This is Carboxy-S-adenosyl-L-methionine synthase from Wolinella succinogenes (strain ATCC 29543 / DSM 1740 / CCUG 13145 / JCM 31913 / LMG 7466 / NCTC 11488 / FDC 602W) (Vibrio succinogenes).